Reading from the N-terminus, the 255-residue chain is Imidazole glycerol phosphate synthase subunit HisF (255 aa).

Catalysis depends on residues aspartate 11 and aspartate 130.

This sequence belongs to the HisA/HisF family. As to quaternary structure, heterodimer of HisH and HisF.

It is found in the cytoplasm. The catalysed reaction is 5-[(5-phospho-1-deoxy-D-ribulos-1-ylimino)methylamino]-1-(5-phospho-beta-D-ribosyl)imidazole-4-carboxamide + L-glutamine = D-erythro-1-(imidazol-4-yl)glycerol 3-phosphate + 5-amino-1-(5-phospho-beta-D-ribosyl)imidazole-4-carboxamide + L-glutamate + H(+). Its pathway is amino-acid biosynthesis; L-histidine biosynthesis; L-histidine from 5-phospho-alpha-D-ribose 1-diphosphate: step 5/9. IGPS catalyzes the conversion of PRFAR and glutamine to IGP, AICAR and glutamate. The HisF subunit catalyzes the cyclization activity that produces IGP and AICAR from PRFAR using the ammonia provided by the HisH subunit. This Synechococcus sp. (strain ATCC 27144 / PCC 6301 / SAUG 1402/1) (Anacystis nidulans) protein is Imidazole glycerol phosphate synthase subunit HisF.